Consider the following 546-residue polypeptide: Calnexin homolog (546 aa).

The first 25 residues, 1 to 25 (MGERKGIPMALGLLAMILFFIASSS), serve as a signal peptide directing secretion. Topologically, residues 26-475 (SHLVRASDDA…EKAEKQPNLT (450 aa)) are lumenal. Ca(2+) contacts are provided by serine 43 and aspartate 74. A disulfide bridge connects residues cysteine 117 and cysteine 152. An alpha-D-glucoside-binding residues include tyrosine 121, lysine 123, tyrosine 143, and aspartate 150. Residues 217–329 (LSSEDFEPPL…PGCGEWKRPT (113 aa)) form a disordered region. Positions 232–365 (IPDPDDKKPE…REIPNPEYFE (134 aa)) are p domain (Extended arm). The span at 233-249 (PDPDDKKPEDWDERAKI) shows a compositional bias: basic and acidic residues. 5 tandem repeats follow at residues 234 to 245 (DPDDKKPEDWDE), 251 to 262 (DPSAVKPDDWDE), 270 to 281 (DEEAEKPEGWLD), 289 to 300 (DPEATKPEDWDD), and 304 to 314 (GEWEAPKIENP). 4 X approximate repeats regions lie at residues 234 to 300 (DPDD…DWDD) and 304 to 361 (GEWE…IPNP). Composition is skewed to acidic residues over residues 259–290 (DWDEDAPMEILDEEAEKPEGWLDDEPEEIDDP) and 297–306 (DWDDEEDGEW). Cysteine 316 and cysteine 322 are joined by a disulfide. Repeat copies occupy residues 323–333 (GEWKRPTKRNP), 337–347 (GKWSAPYIDNP), and 351–361 (GIWKPREIPNP). An alpha-D-glucoside is bound at residue glutamate 380. Aspartate 391 serves as a coordination point for Ca(2+). The N-linked (GlcNAc...) asparagine glycan is linked to asparagine 473. Residues 476–496 (IGILVAVVVVFVSIFFRLIFG) traverse the membrane as a helical segment. The Cytoplasmic segment spans residues 497 to 546 (GKKPAKVEKKPERTEASNNQGSGENEENKEKEKQKEEASNAARRRPRRET). Basic and acidic residues-rich tracts occupy residues 501-511 (AKVEKKPERTE) and 522-534 (EENKEKEKQKEEA). Positions 501-546 (AKVEKKPERTEASNNQGSGENEENKEKEKQKEEASNAARRRPRRET) are disordered.

This sequence belongs to the calreticulin family.

The protein localises to the endoplasmic reticulum membrane. In terms of biological role, calcium-binding protein that interacts with newly synthesized monoglucosylated glycoproteins in the endoplasmic reticulum. It may act in assisting protein assembly and/or in the retention within the ER of unassembled protein subunits. It seems to play a major role in the quality control apparatus of the ER by the retention of incorrectly folded proteins. In Glycine max (Soybean), this protein is Calnexin homolog.